The primary structure comprises 459 residues: UNC93-like protein 1 (459 aa).

A disordered region spans residues 1–26; it reads MNVRDEGKTTAEKHGGGEENKSPENK. Transmembrane regions (helical) follow at residues 38–58, 73–93, 96–116, 122–142, 159–179, 195–215, 251–271, 287–307, 314–334, 355–375, and 425–445; these read LMGFVCFCCPGMFNALSGMGG, AVYTAFTVFGLLGGGFYNVLG, LTLAAGCSTYVLYAGSFLYYN, AFAIVAGALLGCGAGLLWAGE, IALFWSIFNLGGVIGGLIPFI, YIAFMCFMFAGVLLSFGILPA, LLIVPAAWASNFFYSYQFNNV, FYWGAQMAGSIAIGYVMDFSF, GFTGISLVAVIGTIIWAGGLA, GIEFAGPFVLYMSYGLLDAMY, and LIVNWSLTTVSYPLLVLLVYF.

It belongs to the unc-93 family.

Its subcellular location is the membrane. This Arabidopsis thaliana (Mouse-ear cress) protein is UNC93-like protein 1.